The primary structure comprises 496 residues: Cytochrome P450 71D178 (496 aa).

Residues 1 to 21 form a helical; Signal-anchor for type II membrane protein membrane-spanning segment; that stretch reads MDISISWVVIILLVLSYLILM. C435 contributes to the heme binding site.

It belongs to the cytochrome P450 family. Heme serves as cofactor. As to expression, expressed in flowers, leaves and stems, especially in glandular trichomes.

It is found in the membrane. It carries out the reaction (4S)-limonene + reduced [NADPH--hemoprotein reductase] + O2 = (1S,5R)-carveol + oxidized [NADPH--hemoprotein reductase] + H2O + H(+). It catalyses the reaction gamma-terpinene + 2 reduced [NADPH--hemoprotein reductase] + 2 O2 = carvacrol + 2 oxidized [NADPH--hemoprotein reductase] + 3 H2O + 2 H(+). The enzyme catalyses gamma-terpinene + 2 reduced [NADPH--hemoprotein reductase] + 2 O2 = thymol + 2 oxidized [NADPH--hemoprotein reductase] + 3 H2O + 2 H(+). The catalysed reaction is (4R)-limonene + reduced [NADPH--hemoprotein reductase] + O2 = (1R,6S)-isopiperitenol + oxidized [NADPH--hemoprotein reductase] + H2O + H(+). The protein operates within secondary metabolite biosynthesis; terpenoid biosynthesis. Functionally, involved in the biosynthesis of phenolic monoterpenes natural products thymol and carvacrol which have a broad range of biological activities acting as antimicrobial compounds, insecticides, antioxidants and pharmaceutical agents. Catalyzes the C2- and C3-hydroxylation of gamma-terpinene to produce carvacrol and thymol, respectively. Also mediates the C6-hydroxylation of (4S)-limonene to form carveol and the C3-hydroxylation of (4R)-limonene to generate (+)-trans-isopiperitenol. The protein is Cytochrome P450 71D178 of Origanum vulgare (Wild marjoram).